A 199-amino-acid chain; its full sequence is N-(5'-phosphoribosyl)anthranilate isomerase (199 aa).

This sequence belongs to the TrpF family.

The catalysed reaction is N-(5-phospho-beta-D-ribosyl)anthranilate = 1-(2-carboxyphenylamino)-1-deoxy-D-ribulose 5-phosphate. It participates in amino-acid biosynthesis; L-tryptophan biosynthesis; L-tryptophan from chorismate: step 3/5. In Solibacter usitatus (strain Ellin6076), this protein is N-(5'-phosphoribosyl)anthranilate isomerase.